An 85-amino-acid chain; its full sequence is UPF0335 protein Atu3758 (85 aa).

The protein belongs to the UPF0335 family.

This Agrobacterium fabrum (strain C58 / ATCC 33970) (Agrobacterium tumefaciens (strain C58)) protein is UPF0335 protein Atu3758.